Here is a 202-residue protein sequence, read N- to C-terminus: Large ribosomal subunit protein bL25 (202 aa).

The protein belongs to the bacterial ribosomal protein bL25 family. CTC subfamily. As to quaternary structure, part of the 50S ribosomal subunit; part of the 5S rRNA/L5/L18/L25 subcomplex. Contacts the 5S rRNA. Binds to the 5S rRNA independently of L5 and L18.

Functionally, this is one of the proteins that binds to the 5S RNA in the ribosome where it forms part of the central protuberance. This is Large ribosomal subunit protein bL25 from Nitrosomonas eutropha (strain DSM 101675 / C91 / Nm57).